The primary structure comprises 253 residues: Cholesterol ring-cleaving hydrolase IpdB subunit (253 aa).

This sequence belongs to the 3-oxoacid CoA-transferase subunit B family. As to quaternary structure, heterotetramer composed of 2 IpdA subunits and 2 IpdB subunits.

The catalysed reaction is (3E)-2-(2-carboxylatoethyl)-3-methyl-6-oxocyclohex-1-ene-1-carboxyl-CoA + H2O = 6-methyl-3,7-dioxodecanedioyl-CoA. It functions in the pathway steroid metabolism; cholesterol degradation. In terms of biological role, involved in the final steps of cholesterol and steroid degradation. Opens the last steroid ring of cholesterol by catalyzing the hydrolysis of (3E)-2-(2-carboxylatoethyl)-3-methyl-6-oxocyclohex-1-ene-1-carboxyl-CoA (COCHEA-CoA) to 6-methyl-3,7-dioxodecanedioyl-CoA (MeDODA-CoA). This Rhodococcus jostii (strain RHA1) protein is Cholesterol ring-cleaving hydrolase IpdB subunit.